Consider the following 87-residue polypeptide: Small ribosomal subunit protein bS20 (87 aa).

The protein belongs to the bacterial ribosomal protein bS20 family.

In terms of biological role, binds directly to 16S ribosomal RNA. This is Small ribosomal subunit protein bS20 from Clostridium botulinum (strain Eklund 17B / Type B).